The following is a 184-amino-acid chain: Glucosamine 6-phosphate N-acetyltransferase (184 aa).

An N-acetyltransferase domain is found at 39 to 184; that stretch reads LVLRPLCTAD…ENYMCRRFLK (146 aa). Residues Thr-61, 108 to 111, and 120 to 122 contribute to the substrate site; these read KFIH and EDV. Acetyl-CoA is bound at residue 130 to 135; the sequence is GKQLGK. Residue 151-152 coordinates substrate; sequence YK. Residue 165-167 participates in acetyl-CoA binding; the sequence is YKK. Positions 175 and 181 each coordinate substrate.

It belongs to the acetyltransferase family. GNA1 subfamily. Homodimer. As to expression, ubiquitous. Shows a strong differential expression pattern in adult hematopoietic precursor cells.

It localises to the golgi apparatus membrane. It is found in the endosome membrane. It catalyses the reaction D-glucosamine 6-phosphate + acetyl-CoA = N-acetyl-D-glucosamine 6-phosphate + CoA + H(+). It functions in the pathway nucleotide-sugar biosynthesis; UDP-N-acetyl-alpha-D-glucosamine biosynthesis; N-acetyl-alpha-D-glucosamine 1-phosphate from alpha-D-glucosamine 6-phosphate (route I): step 1/2. The sequence is that of Glucosamine 6-phosphate N-acetyltransferase (Gnpnat1) from Mus musculus (Mouse).